We begin with the raw amino-acid sequence, 150 residues long: Non-specific lipid transfer protein GPI-anchored 7 (150 aa).

A signal peptide spans 1–25; it reads MTKTMMIFAAAMTVMALLLVPTIEA. Disulfide bonds link Cys-29/Cys-66, Cys-36/Cys-50, Cys-51/Cys-92, and Cys-64/Cys-101. N-linked (GlcNAc...) asparagine glycosylation is found at Asn-41, Asn-79, and Asn-93. A disordered region spans residues 103–125; that stretch reads AKGAPSPKASLPPPAPAGNTKKD. Asp-125 carries GPI-anchor amidated aspartate lipidation. Positions 126–150 are cleaved as a propeptide — removed in mature form; sequence AGAGNKLAGYGVTTVILSLISSIFF.

It belongs to the plant LTP family. In terms of tissue distribution, up-regulated in the epidermis of stems.

The protein localises to the cell membrane. Functionally, probable lipid transfer protein. This is Non-specific lipid transfer protein GPI-anchored 7 from Arabidopsis thaliana (Mouse-ear cress).